Reading from the N-terminus, the 585-residue chain is Arginine--tRNA ligase (585 aa).

The short motif at 126–136 (PNIAKEMHVGH) is the 'HIGH' region element.

This sequence belongs to the class-I aminoacyl-tRNA synthetase family. Monomer.

The protein resides in the cytoplasm. The catalysed reaction is tRNA(Arg) + L-arginine + ATP = L-arginyl-tRNA(Arg) + AMP + diphosphate. The polypeptide is Arginine--tRNA ligase (Picosynechococcus sp. (strain ATCC 27264 / PCC 7002 / PR-6) (Agmenellum quadruplicatum)).